Here is a 1515-residue protein sequence, read N- to C-terminus: Apolipophorin (1515 aa).

One can recognise a VWFD domain in the interval 952–1118 (LRGVVVNGQH…NSYRLASSCP (167 aa)). The cysteines at positions 976 and 1117 are disulfide-linked. N-linked (GlcNAc...) asparagine glycosylation is present at Asn988.

Hemolymph.

Its subcellular location is the secreted. Mediates transport for various types of lipids in hemolymph. Acts by forming lipoprotein particles that bind lipoproteins and lipids. Binds the A.niger cell wall component alpha-1,3-glucan, a fungal pathogen-associated molecular pattern (PAMP) that activates the host immune response. This chain is Apolipophorin, found in Galleria mellonella (Greater wax moth).